The sequence spans 75 residues: uncharacterized protein (75 aa).

The interval Met1–Ala23 is disordered. Over residues Gln9–Ile20 the composition is skewed to basic and acidic residues. Residues Cys35–Cys59 form a dksA C4-type zinc finger.

This is an uncharacterized protein from Escherichia phage 186 (Bacteriophage 186).